A 209-amino-acid polypeptide reads, in one-letter code: Imidazole glycerol phosphate synthase subunit HisH (209 aa).

One can recognise a Glutamine amidotransferase type-1 domain in the interval lysine 3–phenylalanine 209. Cysteine 81 functions as the Nucleophile in the catalytic mechanism. Active-site residues include histidine 185 and glutamate 187.

Heterodimer of HisH and HisF.

The protein localises to the cytoplasm. It catalyses the reaction 5-[(5-phospho-1-deoxy-D-ribulos-1-ylimino)methylamino]-1-(5-phospho-beta-D-ribosyl)imidazole-4-carboxamide + L-glutamine = D-erythro-1-(imidazol-4-yl)glycerol 3-phosphate + 5-amino-1-(5-phospho-beta-D-ribosyl)imidazole-4-carboxamide + L-glutamate + H(+). The catalysed reaction is L-glutamine + H2O = L-glutamate + NH4(+). It participates in amino-acid biosynthesis; L-histidine biosynthesis; L-histidine from 5-phospho-alpha-D-ribose 1-diphosphate: step 5/9. IGPS catalyzes the conversion of PRFAR and glutamine to IGP, AICAR and glutamate. The HisH subunit catalyzes the hydrolysis of glutamine to glutamate and ammonia as part of the synthesis of IGP and AICAR. The resulting ammonia molecule is channeled to the active site of HisF. The sequence is that of Imidazole glycerol phosphate synthase subunit HisH from Prochlorococcus marinus (strain NATL2A).